The sequence spans 36 residues: Conotoxin Cl14.10 (36 aa).

Residues 1–2 (NE) constitute a propeptide that is removed on maturation.

In terms of processing, contains 2 disulfide bond. Expressed by the venom duct.

It localises to the secreted. This is Conotoxin Cl14.10 from Californiconus californicus (California cone).